Consider the following 254-residue polypeptide: Tyrosine-protein phosphatase YwqE (254 aa).

It belongs to the metallo-dependent hydrolases superfamily. CpsB/CapC family. Mn(2+) is required as a cofactor.

The enzyme catalyses O-phospho-L-tyrosyl-[protein] + H2O = L-tyrosyl-[protein] + phosphate. Inhibited by vanadate and sodium pyrophosphate. Not inhibited by sodium fluoride. In terms of biological role, dephosphorylates the phosphotyrosine-containing proteins YwqD, YwqF and Ssb. In Bacillus subtilis (strain 168), this protein is Tyrosine-protein phosphatase YwqE (ywqE).